The following is a 205-amino-acid chain: Holliday junction branch migration complex subunit RuvA (205 aa).

The domain I stretch occupies residues 1–64 (MIGRLKGILV…EDAQLLYGFI (64 aa)). Residues 65–143 (HKEERSLFRL…SLMEASMGAE (79 aa)) are domain II. A flexible linker region spans residues 144 to 156 (REFVLKSNFTPAP). The tract at residues 157-205 (VAATVEEDAIAALLSLGYKPQQASKAVSSAFQEGMDPEQLIKAALKSML) is domain III.

The protein belongs to the RuvA family. In terms of assembly, homotetramer. Forms an RuvA(8)-RuvB(12)-Holliday junction (HJ) complex. HJ DNA is sandwiched between 2 RuvA tetramers; dsDNA enters through RuvA and exits via RuvB. An RuvB hexamer assembles on each DNA strand where it exits the tetramer. Each RuvB hexamer is contacted by two RuvA subunits (via domain III) on 2 adjacent RuvB subunits; this complex drives branch migration. In the full resolvosome a probable DNA-RuvA(4)-RuvB(12)-RuvC(2) complex forms which resolves the HJ.

Its subcellular location is the cytoplasm. The RuvA-RuvB-RuvC complex processes Holliday junction (HJ) DNA during genetic recombination and DNA repair, while the RuvA-RuvB complex plays an important role in the rescue of blocked DNA replication forks via replication fork reversal (RFR). RuvA specifically binds to HJ cruciform DNA, conferring on it an open structure. The RuvB hexamer acts as an ATP-dependent pump, pulling dsDNA into and through the RuvAB complex. HJ branch migration allows RuvC to scan DNA until it finds its consensus sequence, where it cleaves and resolves the cruciform DNA. The protein is Holliday junction branch migration complex subunit RuvA of Shewanella amazonensis (strain ATCC BAA-1098 / SB2B).